Here is a 220-residue protein sequence, read N- to C-terminus: Deoxyribose-phosphate aldolase 2 (220 aa).

Asp89 acts as the Proton donor/acceptor in catalysis. Catalysis depends on Lys151, which acts as the Schiff-base intermediate with acetaldehyde. Lys180 functions as the Proton donor/acceptor in the catalytic mechanism.

The protein belongs to the DeoC/FbaB aldolase family. DeoC type 1 subfamily.

It is found in the cytoplasm. The catalysed reaction is 2-deoxy-D-ribose 5-phosphate = D-glyceraldehyde 3-phosphate + acetaldehyde. Its pathway is carbohydrate degradation; 2-deoxy-D-ribose 1-phosphate degradation; D-glyceraldehyde 3-phosphate and acetaldehyde from 2-deoxy-alpha-D-ribose 1-phosphate: step 2/2. Catalyzes a reversible aldol reaction between acetaldehyde and D-glyceraldehyde 3-phosphate to generate 2-deoxy-D-ribose 5-phosphate. This Staphylococcus aureus (strain MRSA252) protein is Deoxyribose-phosphate aldolase 2.